We begin with the raw amino-acid sequence, 60 residues long: Hemocyte defensin Cg-Defh1 (60 aa).

Residues leucine 1–alanine 17 form the signal peptide. Residues phenylalanine 19, glycine 20, and cysteine 21 each coordinate beta-D-GlcNAc-(1-&gt;4)-Mur2Ac(oyl-L-Ala-gamma-D-Glu-L-Lys-D-Ala-D-Ala)-di-trans,octa-cis-undecaprenyl diphosphate. Intrachain disulfides connect cysteine 21–cysteine 42, cysteine 28–cysteine 51, cysteine 32–cysteine 53, and cysteine 37–cysteine 56. Residues proline 22–glutamine 25 form a binds to membrane interface region. Histidine 31 contacts beta-D-GlcNAc-(1-&gt;4)-Mur2Ac(oyl-L-Ala-gamma-D-Glu-L-Lys-D-Ala-D-Ala)-di-trans,octa-cis-undecaprenyl diphosphate. A binds to membrane interface region spans residues aspartate 43 to leucine 49. Residue cysteine 51 coordinates beta-D-GlcNAc-(1-&gt;4)-Mur2Ac(oyl-L-Ala-gamma-D-Glu-L-Lys-D-Ala-D-Ala)-di-trans,octa-cis-undecaprenyl diphosphate.

The protein belongs to the invertebrate defensin family. Expressed in hemocytes.

Its subcellular location is the secreted. It localises to the target cell membrane. Functionally, antibacterial peptide mostly active against Gram-positive bacteria. It acts by selectively inhibiting peptidoglycan biosynthesis through complex formation with the cell wall precursor lipid II (1:1 molar ratio) thus inhibiting cell wall synthesis. It does not disrupt cell membranes. Is noticeably less potent than Cg-Defh2 and Cg-Defm. Shows no or limited activities against Gram-negative bacteria. The sequence is that of Hemocyte defensin Cg-Defh1 from Magallana gigas (Pacific oyster).